Here is a 1263-residue protein sequence, read N- to C-terminus: Multidrug resistance protein sirA (1263 aa).

Positions 1-21 (MAEPESEKPSSAQGGGLPSSD) are disordered. A run of 4 helical transmembrane segments spans residues 57–77 (LISA…ILFI), 104–124 (IALY…IFTN), 179–199 (KIGL…IGFV), and 206–226 (FILT…SGFM). One can recognise an ABC transmembrane type-1 1 domain in the interval 57-347 (LISAFFAAVS…VGPHLQAMSL (291 aa)). A glycan (N-linked (GlcNAc...) asparagine) is linked at Asn232. Transmembrane regions (helical) follow at residues 284-304 (VMGW…GLAI) and 318-338 (VGAI…FGNV). The ABC transporter 1 domain maps to 380 to 625 (IEFRNVSHVY…EGLYQTFVRR (246 aa)). The N-linked (GlcNAc...) asparagine glycan is linked to Asn384. 415-422 (GASGSGKS) is an ATP binding site. A glycan (N-linked (GlcNAc...) asparagine) is linked at Asn469. The tract at residues 635–672 (PPHARITPAVDTPASPQHRLSEKTGSIYGQGESEAADK) is disordered. The next 6 helical transmembrane spans lie at 699 to 719 (VTGI…SVFF), 740 to 760 (FWAA…GVQG), 817 to 839 (VFLG…SLAV), 843 to 865 (LTLV…LKLV), 930 to 950 (LSEA…ATLV), and 960 to 980 (FFIV…VFAF). Residues 699–986 (VTGIASAVIS…VFAFAPDFGK (288 aa)) enclose the ABC transmembrane type-1 2 domain. The ABC transporter 2 domain maps to 1021–1259 (VDVSNVVFYY…RGSYYDSVNL (239 aa)). 1056–1063 (GGSGSGKS) provides a ligand contact to ATP.

It belongs to the ABC transporter superfamily. ABCB family. Multidrug resistance exporter (TC 3.A.1.201) subfamily.

It is found in the cell membrane. It catalyses the reaction ATP + H2O + xenobioticSide 1 = ADP + phosphate + xenobioticSide 2.. Sirodesmin transporter that provides the dual role of sirodesmin export and self-protection. Also provides tolerance to gliotoxin. This chain is Multidrug resistance protein sirA, found in Leptosphaeria maculans (Blackleg fungus).